The chain runs to 181 residues: MINVIANRYAEALFQLGEEENSTDVLFKELEKVVDMMTKVSKDFYKVLKSPLVSKSEKKNLVEIIFSKEVSSNIKNFLKVLVDKDRISYLEDIELAYKELLNKKNNVIDGVAISAIPMSETDIKELEVKLSNKYNKNVTIENVVDKTILGGVLVRIGNEQIDGTVKTRLDKMKEKLSEVIS.

Belongs to the ATPase delta chain family. As to quaternary structure, F-type ATPases have 2 components, F(1) - the catalytic core - and F(0) - the membrane proton channel. F(1) has five subunits: alpha(3), beta(3), gamma(1), delta(1), epsilon(1). F(0) has three main subunits: a(1), b(2) and c(10-14). The alpha and beta chains form an alternating ring which encloses part of the gamma chain. F(1) is attached to F(0) by a central stalk formed by the gamma and epsilon chains, while a peripheral stalk is formed by the delta and b chains.

It is found in the cell membrane. F(1)F(0) ATP synthase produces ATP from ADP in the presence of a proton or sodium gradient. F-type ATPases consist of two structural domains, F(1) containing the extramembraneous catalytic core and F(0) containing the membrane proton channel, linked together by a central stalk and a peripheral stalk. During catalysis, ATP synthesis in the catalytic domain of F(1) is coupled via a rotary mechanism of the central stalk subunits to proton translocation. Functionally, this protein is part of the stalk that links CF(0) to CF(1). It either transmits conformational changes from CF(0) to CF(1) or is implicated in proton conduction. This Clostridioides difficile (strain 630) (Peptoclostridium difficile) protein is ATP synthase subunit delta.